The chain runs to 1174 residues: Male determiner protein Mdmd(II) (1174 aa).

Positions 1-15 (MNATDAESRKPENKP) are enriched in basic and acidic residues. Disordered stretches follow at residues 1–51 (MNAT…SGQR), 80–109 (KDGS…HPVE), and 136–259 (KQLS…LRRS). Low complexity predominate over residues 16–35 (SSESSSSGSTSGSSDGEVSS). A compositionally biased stretch (polar residues) spans 36 to 47 (KTYFKNNKSKVL). Positions 80–92 (KDGSNEMLPKEDS) are enriched in basic and acidic residues. The span at 93–102 (INTNHNYTTD) shows a compositional bias: polar residues. Low complexity predominate over residues 138–153 (LSAYRSRSRSTRLSYS). The span at 183-200 (HGRDSSTTKRSVSRDKDN) shows a compositional bias: basic and acidic residues. Basic residues predominate over residues 201-223 (RLRRRIGSSRSHTRSHSRFRRSE). The segment covering 235 to 259 (RSQERRHERRRSMSSDYERIALRRS) has biased composition (basic and acidic residues). One can recognise an MIF4G domain in the interval 348–531 (KKYIHGYINK…KVLFQVRRDG (184 aa)). Residues 597–608 (DSDGSFGSGSNS) are compositionally biased toward low complexity. Residues 597-616 (DSDGSFGSGSNSETALSDCD) form a disordered region. Residues 641–757 (ALRRTIYLTL…SWDVLDCIKL (117 aa)) form the MI domain. A compositionally biased stretch (low complexity) spans 840–857 (SAPSSSSSSSLSSELSAP). Disordered stretches follow at residues 840–1045 (SAPS…SRTK) and 1095–1133 (RKDN…NHSR). The segment covering 869-909 (KKKHKGKNKKMTKKKNPSKKKEKTKKIVGKNKIAAKNKTIK) has biased composition (basic residues). Positions 910 to 924 (RRTDKDNSSSKDNFL) are enriched in basic and acidic residues. Over residues 926 to 957 (SESSSNESISLDSLSSELFAPSSYSSSESSND) the composition is skewed to low complexity. The span at 963 to 1001 (KHKGKNKKMTKKKNPSNKREKTKKKLSKNKKAPNKNTKK) shows a compositional bias: basic residues. A compositionally biased stretch (low complexity) spans 1010-1020 (SSESSISESKS). The segment covering 1034 to 1045 (RKKRVTSKSRTK) has biased composition (basic residues). The segment covering 1095-1118 (RKDNYGNRQNHEISQRHDSEIKRR) has biased composition (basic and acidic residues). Positions 1119–1130 (REERKKRHHEKN) are enriched in basic residues.

The protein belongs to the CWC22 family. In terms of assembly, component of the spliceosome C complex.

It localises to the nucleus speckle. Its function is as follows. Male determiner protein (M-factor) that controls male somatic sexual differentiation. Acts as a dominant factor that regulates the mRNA splicing of transformer (tra) and doublesex (dsx) transcripts and promotes expression of male splice forms of tra and dsx. Probably acts as a component of the spliceosome C complex required for mRNA splicing factor and exon-junction complex (EJC) assembly. Hinders eIF4AIII from non-specifically binding RNA and escorts it to the splicing machinery to promote EJC assembly on mature mRNAs. The protein is Male determiner protein Mdmd(II) of Musca domestica (House fly).